We begin with the raw amino-acid sequence, 303 residues long: Methionyl-tRNA formyltransferase (303 aa).

A (6S)-5,6,7,8-tetrahydrofolate-binding site is contributed by 108–111 (SDLP).

This sequence belongs to the Fmt family.

The enzyme catalyses L-methionyl-tRNA(fMet) + (6R)-10-formyltetrahydrofolate = N-formyl-L-methionyl-tRNA(fMet) + (6S)-5,6,7,8-tetrahydrofolate + H(+). In terms of biological role, attaches a formyl group to the free amino group of methionyl-tRNA(fMet). The formyl group appears to play a dual role in the initiator identity of N-formylmethionyl-tRNA by promoting its recognition by IF2 and preventing the misappropriation of this tRNA by the elongation apparatus. The chain is Methionyl-tRNA formyltransferase from Rickettsia africae (strain ESF-5).